A 775-amino-acid polypeptide reads, in one-letter code: ADP-ribosylation factor GTPase-activating protein AGD4 (775 aa).

Residues Ala2–Gln226 enclose the BAR domain. The PH domain maps to Glu288–Gly421. Residues Asp467 to Ala603 form the Arf-GAP domain. The C4-type zinc-finger motif lies at Cys482–Cys505. ANK repeat units lie at residues Gln682–Ile711 and His715–Ile744.

Expressed in roots, hypocotyls, cotyledons, leaf and shoot apical meristems and siliques.

Functionally, probable GTPase-activating protein. The sequence is that of ADP-ribosylation factor GTPase-activating protein AGD4 (AGD4) from Arabidopsis thaliana (Mouse-ear cress).